The following is a 125-amino-acid chain: Immunoglobulin heavy variable 4-39 (125 aa).

An N-terminal signal peptide occupies residues 1 to 26; it reads MDLMCKKMKHLWFFLLLVAAPRWVLS. The segment at 27-51 is framework-1; the sequence is QLQLQESGPGLVKPSETLSLTCTVS. An Ig-like domain is found at 27-125; the sequence is QLQLQESGPG…ADTAVYYCAR (99 aa). Cys-48 and Cys-123 are joined by a disulfide. A complementarity-determining-1 region spans residues 52 to 61; that stretch reads GGSISSSSYY. The framework-2 stretch occupies residues 62 to 78; the sequence is WGWIRQPPGKGLEWIGS. The complementarity-determining-2 stretch occupies residues 79-85; the sequence is IYYSGST. The framework-3 stretch occupies residues 86–123; that stretch reads YYNPSLKSRVTISVDTSKNQFSLKLSSVTAADTAVYYC. The tract at residues 124–125 is complementarity-determining-3; the sequence is AR.

Immunoglobulins are composed of two identical heavy chains and two identical light chains; disulfide-linked.

Its subcellular location is the secreted. The protein localises to the cell membrane. In terms of biological role, v region of the variable domain of immunoglobulin heavy chains that participates in the antigen recognition. Immunoglobulins, also known as antibodies, are membrane-bound or secreted glycoproteins produced by B lymphocytes. In the recognition phase of humoral immunity, the membrane-bound immunoglobulins serve as receptors which, upon binding of a specific antigen, trigger the clonal expansion and differentiation of B lymphocytes into immunoglobulins-secreting plasma cells. Secreted immunoglobulins mediate the effector phase of humoral immunity, which results in the elimination of bound antigens. The antigen binding site is formed by the variable domain of one heavy chain, together with that of its associated light chain. Thus, each immunoglobulin has two antigen binding sites with remarkable affinity for a particular antigen. The variable domains are assembled by a process called V-(D)-J rearrangement and can then be subjected to somatic hypermutations which, after exposure to antigen and selection, allow affinity maturation for a particular antigen. The polypeptide is Immunoglobulin heavy variable 4-39 (Homo sapiens (Human)).